The primary structure comprises 157 residues: uncharacterized protein (157 aa).

This is an uncharacterized protein from Bacillus subtilis (strain 168).